The chain runs to 148 residues: Arginine repressor (148 aa).

This sequence belongs to the ArgR family.

Its subcellular location is the cytoplasm. Its pathway is amino-acid biosynthesis; L-arginine biosynthesis [regulation]. Its function is as follows. Regulates arginine biosynthesis genes. The chain is Arginine repressor from Chlorobium phaeovibrioides (strain DSM 265 / 1930) (Prosthecochloris vibrioformis (strain DSM 265)).